Here is a 159-residue protein sequence, read N- to C-terminus: Phosphopantetheine adenylyltransferase (159 aa).

Ser8 provides a ligand contact to substrate. ATP is bound by residues 8-9 (SF) and His16. Positions 40, 73, and 87 each coordinate substrate. ATP is bound by residues 88-90 (GLR), Glu98, and 122-128 (YGYVSST).

Belongs to the bacterial CoaD family. As to quaternary structure, homohexamer. Requires Mg(2+) as cofactor.

It localises to the cytoplasm. The enzyme catalyses (R)-4'-phosphopantetheine + ATP + H(+) = 3'-dephospho-CoA + diphosphate. Its pathway is cofactor biosynthesis; coenzyme A biosynthesis; CoA from (R)-pantothenate: step 4/5. In terms of biological role, reversibly transfers an adenylyl group from ATP to 4'-phosphopantetheine, yielding dephospho-CoA (dPCoA) and pyrophosphate. The sequence is that of Phosphopantetheine adenylyltransferase from Corynebacterium efficiens (strain DSM 44549 / YS-314 / AJ 12310 / JCM 11189 / NBRC 100395).